We begin with the raw amino-acid sequence, 325 residues long: Sensor histidine kinase YxdK (325 aa).

At 1–8 (MKLFLRSH) the chain is on the cytoplasmic side. A helical transmembrane segment spans residues 9–29 (AVLILLFLLQGLFVFFYYWFA). The Extracellular segment spans residues 30–33 (GLHS). Residues 34–54 (FSHLFYILGVQLLILAGYLAY) form a helical membrane-spanning segment. The Cytoplasmic portion of the chain corresponds to 55–325 (RWYKDRGVYH…SVRFSFLTKM (271 aa)). Positions 118–325 (QWVHQVKTPL…SVRFSFLTKM (208 aa)) constitute a Histidine kinase domain. Position 121 is a phosphohistidine; by autocatalysis (histidine 121).

The protein localises to the cell membrane. The catalysed reaction is ATP + protein L-histidine = ADP + protein N-phospho-L-histidine.. Probable member of the two-component regulatory system YxdK/YxdJ. May activate YxdJ in response to the antibacterial protein LL-37. This chain is Sensor histidine kinase YxdK (yxdK), found in Bacillus subtilis (strain 168).